We begin with the raw amino-acid sequence, 27 residues long: Phospholipase A2 P-elapitoxin-Aa1a alpha chain (27 aa).

It belongs to the phospholipase A2 family. Group I subfamily. Heterotrimer of alpha, beta and gamma chains, each related to PLA2. Ca(2+) is required as a cofactor. As to expression, expressed by the venom gland.

Its subcellular location is the secreted. It catalyses the reaction a 1,2-diacyl-sn-glycero-3-phosphocholine + H2O = a 1-acyl-sn-glycero-3-phosphocholine + a fatty acid + H(+). Its function is as follows. Heterotrimer: presynaptic neurotoxin. Inhibits nerve-evoked twitch contractions but not responses to cholinergic agonists acetylcholine and carbachol and to depolarizing agonist KCl. Causes a fade in tetanic contractions. Displays a triphasic mode of action with depression, enhancement and blockade of neurotransmission. Does not display myotoxic activity such as changes in baseline muscle tension or inhibition of directly stimulated muscle twitches. All subunits are necessary for maximum toxicity. In terms of biological role, monomer: Snake venom phospholipase A2 (PLA2) alpha chain that has enzymatic activity. PLA2 catalyzes the calcium-dependent hydrolysis of the 2-acyl groups in 3-sn-phosphoglycerides. The polypeptide is Phospholipase A2 P-elapitoxin-Aa1a alpha chain (Acanthophis antarcticus (Common death adder)).